Reading from the N-terminus, the 97-residue chain is Co-chaperonin GroES (97 aa).

Belongs to the GroES chaperonin family. As to quaternary structure, heptamer of 7 subunits arranged in a ring. Interacts with the chaperonin GroEL.

The protein localises to the cytoplasm. Its function is as follows. Together with the chaperonin GroEL, plays an essential role in assisting protein folding. The GroEL-GroES system forms a nano-cage that allows encapsulation of the non-native substrate proteins and provides a physical environment optimized to promote and accelerate protein folding. GroES binds to the apical surface of the GroEL ring, thereby capping the opening of the GroEL channel. This chain is Co-chaperonin GroES, found in Yersinia pseudotuberculosis serotype O:1b (strain IP 31758).